The chain runs to 231 residues: Ribose-5-phosphate isomerase A (231 aa).

Substrate contacts are provided by residues 32 to 35 (TGST), 85 to 88 (DGAD), and 98 to 101 (KGGG). Glutamate 107 serves as the catalytic Proton acceptor. Residue lysine 125 participates in substrate binding.

This sequence belongs to the ribose 5-phosphate isomerase family. Homodimer.

It carries out the reaction aldehydo-D-ribose 5-phosphate = D-ribulose 5-phosphate. The protein operates within carbohydrate degradation; pentose phosphate pathway; D-ribose 5-phosphate from D-ribulose 5-phosphate (non-oxidative stage): step 1/1. Functionally, catalyzes the reversible conversion of ribose-5-phosphate to ribulose 5-phosphate. This is Ribose-5-phosphate isomerase A from Paraburkholderia phymatum (strain DSM 17167 / CIP 108236 / LMG 21445 / STM815) (Burkholderia phymatum).